The sequence spans 461 residues: F-box protein At3g62230 (461 aa).

The F-box domain maps to 7–55 (VDIISTLSDFLLVLIISNLSFKEALSTSRLSTRWRHICRETRNISFRED).

Part of a SCF (ASK-cullin-F-box) protein ligase complex. Interacts with ASK4.

Its subcellular location is the nucleus. It functions in the pathway protein modification; protein ubiquitination. Functionally, component of SCF(ASK-cullin-F-box) E3 ubiquitin ligase complexes, which may mediate the ubiquitination and subsequent proteasomal degradation of target proteins. In Arabidopsis thaliana (Mouse-ear cress), this protein is F-box protein At3g62230.